A 797-amino-acid chain; its full sequence is Ent-atiserene synthase KSL1, chloroplastic (797 aa).

The N-terminal 48 residues, 1–48 (LVKDDMSLILSSFSLFRSSRSSPASASLAGSGHPRTTPPKIASLQSPM), are a transit peptide targeting the chloroplast. Positions 21–32 (SSPASASLAGSG) are enriched in low complexity. A disordered region spans residues 21–47 (SSPASASLAGSGHPRTTPPKIASLQSP). Positions 547, 551, 691, and 699 each coordinate Mg(2+). Residues 547 to 551 (DDLFD) carry the DDXXD motif motif.

It belongs to the terpene synthase family. The cofactor is Mg(2+).

The protein localises to the plastid. The protein resides in the chloroplast. The catalysed reaction is ent-copalyl diphosphate = ent-atiserene + diphosphate. It participates in secondary metabolite biosynthesis; terpenoid biosynthesis. In terms of biological role, involved in the biosynthesis of ent-kaurene diterpenoids natural products such as oridonin, miltiradiene, eriocalyxin B and nezukol, known to exhibit antitumor, anti-inflammatory and antibacterial activities. Catalyzes the conversion of ent-copalyl diphosphate (ent-CPP) to ent-atiserene. This is Ent-atiserene synthase KSL1, chloroplastic from Isodon japonicus (Scutellaria japonica).